Consider the following 319-residue polypeptide: tRNA dimethylallyltransferase (319 aa).

16–23 (GPTASGKS) provides a ligand contact to ATP. 18-23 (TASGKS) serves as a coordination point for substrate. Positions 46–49 (DSMV) are interaction with substrate tRNA.

Belongs to the IPP transferase family. Monomer. Requires Mg(2+) as cofactor.

The catalysed reaction is adenosine(37) in tRNA + dimethylallyl diphosphate = N(6)-dimethylallyladenosine(37) in tRNA + diphosphate. In terms of biological role, catalyzes the transfer of a dimethylallyl group onto the adenine at position 37 in tRNAs that read codons beginning with uridine, leading to the formation of N6-(dimethylallyl)adenosine (i(6)A). The polypeptide is tRNA dimethylallyltransferase (Cutibacterium acnes (strain DSM 16379 / KPA171202) (Propionibacterium acnes)).